Here is a 216-residue protein sequence, read N- to C-terminus: Kynurenine formamidase (216 aa).

Position 24 (Trp24) interacts with substrate. Residues His54, His58, and Asp60 each contribute to the Zn(2+) site. His64 functions as the Proton donor/acceptor in the catalytic mechanism. Residues His164 and Glu176 each contribute to the Zn(2+) site.

It belongs to the Cyclase 1 superfamily. KynB family. In terms of assembly, homodimer. The cofactor is Zn(2+).

The enzyme catalyses N-formyl-L-kynurenine + H2O = L-kynurenine + formate + H(+). Its pathway is amino-acid degradation; L-tryptophan degradation via kynurenine pathway; L-kynurenine from L-tryptophan: step 2/2. Functionally, catalyzes the hydrolysis of N-formyl-L-kynurenine to L-kynurenine, the second step in the kynurenine pathway of tryptophan degradation. This is Kynurenine formamidase from Erythrobacter litoralis (strain HTCC2594).